We begin with the raw amino-acid sequence, 468 residues long: BTB/POZ domain-containing protein 17 (468 aa).

Residues 1–16 (MRRFCVVPLLLVLVEA) form the signal peptide. Residues 51-120 (TDTILRIRTA…FYCGEISVNL (70 aa)) enclose the BTB domain. In terms of domain architecture, BACK spans 159-259 (VVSWYHYALR…ISPSQLFQIQ (101 aa)).

The protein localises to the secreted. The polypeptide is BTB/POZ domain-containing protein 17 (btbd17) (Xenopus tropicalis (Western clawed frog)).